An 876-amino-acid polypeptide reads, in one-letter code: Alanine--tRNA ligase (876 aa).

Residues histidine 565, histidine 569, cysteine 667, and histidine 671 each coordinate Zn(2+).

It belongs to the class-II aminoacyl-tRNA synthetase family. The cofactor is Zn(2+).

It localises to the cytoplasm. It carries out the reaction tRNA(Ala) + L-alanine + ATP = L-alanyl-tRNA(Ala) + AMP + diphosphate. Its function is as follows. Catalyzes the attachment of alanine to tRNA(Ala) in a two-step reaction: alanine is first activated by ATP to form Ala-AMP and then transferred to the acceptor end of tRNA(Ala). Also edits incorrectly charged Ser-tRNA(Ala) and Gly-tRNA(Ala) via its editing domain. The protein is Alanine--tRNA ligase of Staphylococcus aureus (strain MRSA252).